A 709-amino-acid polypeptide reads, in one-letter code: Protein SOSEKI 3 (709 aa).

The interval 8 to 101 is DIX-like oligomerization domain; it reads SSVQVLYQLS…YVLRASELFD (94 aa). 5 disordered regions span residues 242–266, 315–344, 358–393, 411–439, and 506–560; these read LHTPAPRSLTSPTEPPFSPGSAKRM, RDGRSKSASPSSLNELREVQNEKEKEAEQS, GGSSKGKRTPQSTCEDPLPKSPEAKQMPRSRTKTPC, PSPAVDNKAHSSLDRQEIPPQEECKNRPS, and DSPT…DTKP. Positions 329-342 are enriched in basic and acidic residues; sequence ELREVQNEKEKEAE. Residues 417-436 are compositionally biased toward basic and acidic residues; the sequence is NKAHSSLDRQEIPPQEECKN. The span at 529-544 shows a compositional bias: polar residues; it reads VKTSNSLPRVKTTTSP. The C2HC/C3H-type zinc finger occupies 663-692; that stretch reads ILQECSTCGRTFKPDSLQVHMRGCHPPQYA. Residues C667, C670, H682, and C686 each coordinate Zn(2+).

It belongs to the SOSEKI family. In terms of assembly, homodimer. Forms long polymer filaments with other SOKs proteins polymers crucial for polar localization and biological activity. Zn(2+) is required as a cofactor.

The protein localises to the cell membrane. Its function is as follows. SOSEKI proteins locally interpret global polarity cues and can influence cell division orientation to coordinate cell polarization relative to body axes. The sequence is that of Protein SOSEKI 3 from Physcomitrium patens (Spreading-leaved earth moss).